Consider the following 764-residue polypeptide: Thyrotropin receptor (764 aa).

A signal peptide spans 1 to 21 (MRPTPLLRLALLLVLPSSLWG). Over 22-413 (ERCPSPPCEC…EFNPCEDIMG (392 aa)) the chain is Extracellular. The cysteines at positions 31 and 41 are disulfide-linked. The LRR 1 repeat unit spans residues 51–74 (PPSTQTLKFIETHLKTIPSRAFSN). Residues Asn77 and Asn99 are each glycosylated (N-linked (GlcNAc...) asparagine). LRR repeat units follow at residues 125–150 (LPLL…IYST), 152–174 (VFFI…AFQG), 176–199 (SNET…AFNG), 201–223 (KLDA…AFAG), and 225–248 (YSGP…GLEH). N-linked (GlcNAc...) asparagine glycosylation is found at Asn177 and Asn198. A glycan (N-linked (GlcNAc...) asparagine) is linked at Asn302. At Tyr385 the chain carries Sulfotyrosine. The helical transmembrane segment at 414 to 441 (YKFLRIVVWFVSLLALLGNVFVLVILLT) threads the bilayer. At 442-450 (SHYKLTVPR) the chain is on the cytoplasmic side. A helical transmembrane segment spans residues 451–473 (FLMCNLAFADFCMGLYLLLIASV). Over 474–494 (DLYTQSEYYNHAIDWQTGPGC) the chain is Extracellular. An intrachain disulfide couples Cys494 to Cys569. Residues 495–517 (NTAGFFTVFASELSVYTLTVITL) form a helical membrane-spanning segment. Over 518–537 (ERWYAITFAMHLDRKIRLWH) the chain is Cytoplasmic. A helical membrane pass occupies residues 538 to 560 (AYVIMLGGWVCCFLLALLPLVGI). Topologically, residues 561-580 (SSYAKVSICLPMDTETPLAL) are extracellular. A helical membrane pass occupies residues 581–602 (AYIILVLLLNIIAFIIVCACYV). Over 603–625 (KIYITVRNPHYNPGDKDTRIAKR) the chain is Cytoplasmic. The helical transmembrane segment at 626–649 (MAVLIFTDFMCMAPISFYALSALM) threads the bilayer. Residues 650–660 (NKPLITVTNSK) lie on the Extracellular side of the membrane. The helical transmembrane segment at 661–682 (ILLVLFYPLNSCANPFLYAIFT) threads the bilayer. Topologically, residues 683–764 (KAFQRDVFML…TSKEYKQTVL (82 aa)) are cytoplasmic. The PDZ-binding signature appears at 762-764 (TVL).

It belongs to the G-protein coupled receptor 1 family. FSH/LSH/TSH subfamily. In terms of assembly, interacts with heterodimer GPHA2:GPHB5; this interaction stimulates cAMP production. Interacts (via the PDZ-binding motif) with SCRIB; regulates TSHR trafficking and function. Post-translationally, glycosylated. In terms of processing, sulfated. Sulfation on Tyr-385 plays a role in thyrotropin receptor binding and activation.

The protein localises to the cell membrane. It localises to the basolateral cell membrane. Functionally, receptor for the thyroid-stimulating hormone (TSH) or thyrotropin. Also acts as a receptor for the heterodimeric glycoprotein hormone (GPHA2:GPHB5) or thyrostimulin. The activity of this receptor is mediated by G proteins which activate adenylate cyclase. Plays a central role in controlling thyroid cell metabolism. This is Thyrotropin receptor (TSHR) from Ovis aries (Sheep).